A 101-amino-acid polypeptide reads, in one-letter code: Small ribosomal subunit protein uS14 (101 aa).

The protein belongs to the universal ribosomal protein uS14 family. Part of the 30S ribosomal subunit. Contacts proteins S3 and S10.

Functionally, binds 16S rRNA, required for the assembly of 30S particles and may also be responsible for determining the conformation of the 16S rRNA at the A site. The sequence is that of Small ribosomal subunit protein uS14 from Kocuria rhizophila (strain ATCC 9341 / DSM 348 / NBRC 103217 / DC2201).